A 436-amino-acid polypeptide reads, in one-letter code: UDP-N-acetylmuramate--L-alanine ligase (436 aa).

108-114 (GAHGKTS) lines the ATP pocket.

The protein belongs to the MurCDEF family.

The protein localises to the cytoplasm. It carries out the reaction UDP-N-acetyl-alpha-D-muramate + L-alanine + ATP = UDP-N-acetyl-alpha-D-muramoyl-L-alanine + ADP + phosphate + H(+). Its pathway is cell wall biogenesis; peptidoglycan biosynthesis. In terms of biological role, cell wall formation. In Bacillus cereus (strain ZK / E33L), this protein is UDP-N-acetylmuramate--L-alanine ligase.